The sequence spans 416 residues: Adenylosuccinate synthetase (416 aa).

GTP contacts are provided by residues 13 to 19 (GDEGKGK) and 41 to 43 (GHT). Asp-14 acts as the Proton acceptor in catalysis. Residues Asp-14 and Gly-41 each coordinate Mg(2+). Residues 14–17 (DEGK), 39–42 (NAGH), Thr-126, Arg-140, Gln-220, Thr-235, and Arg-299 contribute to the IMP site. His-42 acts as the Proton donor in catalysis. Residue 295-301 (VSTGRKR) coordinates substrate. GTP-binding positions include Arg-301, 327–329 (KLD), and 405–407 (STS).

Belongs to the adenylosuccinate synthetase family. As to quaternary structure, homodimer. Mg(2+) is required as a cofactor.

It is found in the cytoplasm. It catalyses the reaction IMP + L-aspartate + GTP = N(6)-(1,2-dicarboxyethyl)-AMP + GDP + phosphate + 2 H(+). The protein operates within purine metabolism; AMP biosynthesis via de novo pathway; AMP from IMP: step 1/2. In terms of biological role, plays an important role in the de novo pathway of purine nucleotide biosynthesis. Catalyzes the first committed step in the biosynthesis of AMP from IMP. The protein is Adenylosuccinate synthetase of Campylobacter jejuni subsp. jejuni serotype O:23/36 (strain 81-176).